Consider the following 172-residue polypeptide: Small ribosomal subunit protein uS5 (172 aa).

Positions 17–80 (LREKMISVNR…DEARRKMVKV (64 aa)) constitute an S5 DRBM domain.

It belongs to the universal ribosomal protein uS5 family. As to quaternary structure, part of the 30S ribosomal subunit. Contacts proteins S4 and S8.

With S4 and S12 plays an important role in translational accuracy. In terms of biological role, located at the back of the 30S subunit body where it stabilizes the conformation of the head with respect to the body. The protein is Small ribosomal subunit protein uS5 of Cupriavidus metallidurans (strain ATCC 43123 / DSM 2839 / NBRC 102507 / CH34) (Ralstonia metallidurans).